We begin with the raw amino-acid sequence, 663 residues long: CXXC-type zinc finger protein 1 (663 aa).

Residues 60-110 (QAYCICRSSDCSRFMIGCDGCEEWYHGDCIGITEKEAKHIKQYYCRRCKKE) form a PHD-type zinc finger. A compositionally biased stretch (low complexity) spans 134–161 (TSLNAPGVGPSGAAPAAAPVASATTSQQ). The disordered stretch occupies residues 134–183 (TSLNAPGVGPSGAAPAAAPVASATTSQQAPPPTTAAAKRKNSSAREPKMG). The segment at 175-219 (SSAREPKMGKRCGTCEGCRRPNCNQCDACRVRVGHKPRCIFRTCV) adopts a CXXC-type zinc-finger fold. 8 residues coordinate Zn(2+): Cys186, Cys189, Cys192, Cys197, Cys200, Cys203, Cys213, and Cys218. The tract at residues 230–254 (QATQAGPSRKREKAAPKSRNVQVGP) is disordered. Ser258 carries the phosphoserine modification.

Component of the SET1 complex, composed at least of the catalytic subunit Set1, wds/WDR5, Wdr82, Rbbp5, ash2, Cfp1/CXXC1, hcf and Dpy-30L1.

It is found in the nucleus. Functionally, component of the SET1 complex that specifically di- and trimethylates 'Lys-4' of histone H3. Essential for Set1 association with chromatin and trimethylation of histone H3 at 'Lys-4' at transcription puffs. Additionally, is critical for general chromosomal association of Set1. In Drosophila melanogaster (Fruit fly), this protein is CXXC-type zinc finger protein 1 (Cfp1).